The primary structure comprises 943 residues: Netrin receptor UNC5B-a (943 aa).

A signal peptide spans 1-30 (MYLSRNPSGAALAAILVALILSCNFPSSTA). Topologically, residues 31 to 380 (GIEYSDVLPD…LESTGDVALY (350 aa)) are extracellular. An Ig-like domain is found at 51-148 (PHFLLEPEDA…AGTTKSKRSY (98 aa)). 9 disulfide bridges follow: C72-C133, C84-C131, C177-C228, C261-C298, C265-C302, C276-C288, C317-C351, C321-C356, and C329-C341. An Ig-like C2-type domain is found at 150 to 245 (RIAYLRKNFD…KRRSTTATVI (96 aa)). N225 carries an N-linked (GlcNAc...) asparagine glycan. TSP type-1 domains follow at residues 249 to 303 (NGGW…TMCP) and 305 to 357 (DGGW…GLCM). A glycan (N-linked (GlcNAc...) asparagine) is linked at N350. Residues 381–401 (AGLVVAIFIVIILLMAVGIVV) form a helical membrane-spanning segment. At 402–943 (YRRNCREFDT…MLVMATDGDC (542 aa)) the chain is on the cytoplasmic side. Residues 542–685 (NSVTGTFGSL…LGTYAFVGES (144 aa)) form the ZU5 domain. Residues 688–836 (RSAIKRLQLA…LEENVKSFDP (149 aa)) form a UPA domain region. Residues 863-941 (KICNSLDAPN…EMMLVMATDG (79 aa)) enclose the Death domain.

The protein belongs to the unc-5 family. In terms of assembly, interacts (via extracellular domain) with flrt3 (via extracellular domain). Interacts with rnd1. Post-translationally, phosphorylated on cytoplasmic tyrosine residues. As to expression, in the developing visual system, it is expressed within the developing optic vesicles and later become restricted to the dorsal ciliary marginal zone, a site of retinoblast proliferation and differentiation.

The protein resides in the cell membrane. Plays a role in cell-cell adhesion during embryonic development. Receptor for netrin required for axon guidance. Mediates axon repulsion of neuronal growth cones in the developing nervous system upon ligand binding. The sequence is that of Netrin receptor UNC5B-a (unc5b-a) from Xenopus laevis (African clawed frog).